Here is a 255-residue protein sequence, read N- to C-terminus: Cysteine protease avirulence protein AvrRpt2 (255 aa).

The disordered stretch occupies residues 1 to 50 (MKIAPVAINHSPLSREVPSHAAPTQAKQTNLQSEAGDLDARKSSASSPET). Residues 1–71 (MKIAPVAINH…RHKIEVPAFG (71 aa)) constitute a propeptide, removed in mature form. The interval 70 to 71 (FG) is determinants of cleavage specificity. The interval 76 to 100 (KKSSKHETGGSSANADSSSVASDST) is disordered. The span at 86–98 (SSANADSSSVASD) shows a compositional bias: low complexity. Cys-122 (nucleophile) is an active-site residue. Residues His-208 and Asp-226 contribute to the active site.

It belongs to the peptidase C70 family. In terms of assembly, interacts physically with plant cell ROC1 (Arabidopsis single-domain cyclophilin) and RIN4. In terms of processing, autocleaved inside plant cells upon activation by cyclophilin. Cleavage is crucial in subcellular location and in eliciting HR. Inhibited by cyclosporin A (cyclophilin inhibitor).

Its subcellular location is the secreted. The protein localises to the host cell membrane. In terms of biological role, effector protein involved in gene-for-gene resistance in plants expressing RPS2. Its thiol protease activity is required for the degradation of plant cell RIN4 and consequent activation of RPS2 during bacterial infection. The activation of RPS2 is sufficient for the induction of hypersensitive response (HR) and plant resistance. Cleavage of RIN4 by AvrRpt2 also interferes with RPM1-mediated resistance activated by either AvrRpm1 or AvrB. Contributes to virulence in plants lacking the resistance protein RPS2 promoting pathogen growth and disease symptoms. Inhibits PAMP (pathogen-associated molecular patterns)-induced signaling compromising the host's basal defense system. Blocks plant callose deposition, flg22 (a peptide corresponding to the most conserved domain of flagellin) induced accumulation of PR-1, PR-2 and PR-5 and activation of GST6 transcription. The mechanism of virulence is unknown, but this activity is independent of ethylene and salicylic acid response pathways and independent of RIN4 disappearance. This Pseudomonas syringae pv. tomato protein is Cysteine protease avirulence protein AvrRpt2 (avrRpt2).